A 573-amino-acid polypeptide reads, in one-letter code: L-lactate dehydrogenase (cytochrome) (573 aa).

Residues 1 to 73 (MFKSQLRTAT…LYQKDKFISA (73 aa)) constitute a mitochondrion transit peptide. One can recognise a Cytochrome b5 heme-binding domain in the interval 80-157 (DIELTPEIVS…PPEKHLGPLV (78 aa)). Residues histidine 115, histidine 138, and tyrosine 208 each coordinate heme b. The FMN hydroxy acid dehydrogenase domain occupies 182–542 (PPLSQMINLH…TPELLDTRSI (361 aa)). Residue tyrosine 208 participates in pyruvate binding. FMN-binding positions include 260 to 263 (SATA), serine 290, and glutamine 313. Residue tyrosine 315 coordinates pyruvate. Threonine 341 serves as a coordination point for FMN. Lysine 357 is a binding site for heme b. FMN is bound at residue lysine 408. 2 residues coordinate pyruvate: histidine 432 and arginine 435. FMN contacts are provided by residues 468–472 (DGGVR) and 491–492 (GR).

It in the N-terminal section; belongs to the cytochrome b5 family. This sequence in the C-terminal section; belongs to the FMN-dependent alpha-hydroxy acid dehydrogenase family. In terms of assembly, homotetramer. Requires FMN as cofactor. It depends on heme b as a cofactor.

The protein localises to the mitochondrion intermembrane space. The enzyme catalyses (S)-lactate + 2 Fe(III)-[cytochrome c] = 2 Fe(II)-[cytochrome c] + pyruvate + 2 H(+). Its function is as follows. Catalyzes the oxidation of (S)-lactate (L-lactate) to pyruvate with subsequent transfer of electrons to cytochrome c. Is involved in the utilization of (S)-lactate as a sole source of carbon for growth. In Wickerhamomyces anomalus (Yeast), this protein is L-lactate dehydrogenase (cytochrome) (CYB2).